The sequence spans 1088 residues: DEAD-box ATP-dependent RNA helicase 40 (1088 aa).

Disordered stretches follow at residues 1-28 (MATT…PWKG), 47-178 (TQYE…QYAH), and 192-254 (TQGL…QNTH). Ala-2 is modified (N-acetylalanine). Residues 20 to 54 (PTLPQPWKGLIDGSTGILYYWNPETNVTQYERPSA) enclose the WW domain. 3 stretches are compositionally biased toward low complexity: residues 87–137 (VGHV…SQSM), 148–171 (QTYQ…MPQQ), and 200–215 (QTPQ…PSQQ). A compositionally biased stretch (basic and acidic residues) spans 222–231 (PKREGDEFHG). Positions 236–254 (GFSQPHLPNSERSPSQNTH) are enriched in polar residues. Residues 435-463 (ITFESSGLPPEILRELLSAGFPSPTPIQA) carry the Q motif motif. The Helicase ATP-binding domain maps to 466–640 (WPIALQSRDI…SDLLVNPVQV (175 aa)). 479–486 (AKTGSGKT) contributes to the ATP binding site. The DEAD box motif lies at 588–591 (DEAD). The Helicase C-terminal domain maps to 669–813 (RLEQILRSQE…QVPPQVRDIA (145 aa)). 4 stretches are compositionally biased toward gly residues: residues 861 to 885 (EGGF…GGRF), 893 to 902 (GRGGNRGRGF), 911 to 920 (NVGGRGGFGR), and 932 to 944 (FGRG…GRGV). The segment at 861–1033 (EGGFGGREGG…RRDRAPRVSG (173 aa)) is disordered. Basic and acidic residues predominate over residues 945–963 (GRFDNRRGRSRSRSPDLVR). The segment covering 969–983 (SSYSRSRSRSGSYSR) has biased composition (low complexity). Positions 984–1013 (SRSRSRSWSRSRSRSPRHSRDRGGHNRSRS) are enriched in basic residues.

The protein belongs to the DEAD box helicase family. DDX5/DBP2 subfamily.

Its subcellular location is the nucleus. It carries out the reaction ATP + H2O = ADP + phosphate + H(+). In terms of biological role, ATP-dependent RNA helicase involved nonsense-mediated mRNA decay and ribosome biogenesis through rRNA processing. This is DEAD-box ATP-dependent RNA helicase 40 (RH40) from Arabidopsis thaliana (Mouse-ear cress).